The primary structure comprises 118 residues: Small ribosomal subunit protein bS6 (118 aa).

Residues Thr98–Glu118 form a disordered region. Positions Ala99–Glu118 are enriched in low complexity.

The protein belongs to the bacterial ribosomal protein bS6 family.

Functionally, binds together with bS18 to 16S ribosomal RNA. The chain is Small ribosomal subunit protein bS6 from Geobacter metallireducens (strain ATCC 53774 / DSM 7210 / GS-15).